We begin with the raw amino-acid sequence, 447 residues long: BAG family molecular chaperone regulator 5 (447 aa).

5 consecutive BAG domains span residues 9–86 (SISR…EQNA), 95–167 (QNIF…EDCM), 182–260 (SVAK…DLEE), 275–350 (SIIK…DLKE), and 365–442 (PHKA…DMKS).

As to quaternary structure, binds to the ATPase domain of HSP/HSP70 chaperones. Binds PRKN. Interacts with HSPA8. Interacts with JPH2.

Its function is as follows. Co-chaperone for HSP/HSP70 proteins. It functions as a nucleotide-exchange factor promoting the release of ADP from HSP70, thereby activating HSP70-mediated protein refolding. Has an essential role in maintaining proteostasis at junctional membrane complexes (JMC), where it may function as a scaffold between the HSPA8 chaperone and JMC proteins enabling correct, HSPA8-dependent JMC protein folding. Inhibits both auto-ubiquitination of PRKN and ubiquitination of target proteins by PRKN. This Mus musculus (Mouse) protein is BAG family molecular chaperone regulator 5 (Bag5).